A 240-amino-acid polypeptide reads, in one-letter code: Large ribosomal subunit protein uL2 (240 aa).

Positions 199 to 240 (DHPFGGGGRQHPGRPKSVSRDAAPGRKVGDIASKRTGRGGNE) are disordered. The span at 221-231 (APGRKVGDIAS) shows a compositional bias: basic and acidic residues.

The protein belongs to the universal ribosomal protein uL2 family. Part of the 50S ribosomal subunit. Forms a bridge to the 30S subunit in the 70S ribosome.

In terms of biological role, one of the primary rRNA binding proteins. Required for association of the 30S and 50S subunits to form the 70S ribosome, for tRNA binding and peptide bond formation. It has been suggested to have peptidyltransferase activity; this is somewhat controversial. Makes several contacts with the 16S rRNA in the 70S ribosome. In Halobacterium salinarum (strain ATCC 29341 / DSM 671 / R1), this protein is Large ribosomal subunit protein uL2.